The chain runs to 384 residues: Alanine racemase (384 aa).

Lys-46 functions as the Proton acceptor; specific for D-alanine in the catalytic mechanism. Lys-46 carries the post-translational modification N6-(pyridoxal phosphate)lysine. Arg-144 lines the substrate pocket. Tyr-278 serves as the catalytic Proton acceptor; specific for L-alanine. Residue Met-326 coordinates substrate.

This sequence belongs to the alanine racemase family. Pyridoxal 5'-phosphate serves as cofactor.

The catalysed reaction is L-alanine = D-alanine. It functions in the pathway amino-acid biosynthesis; D-alanine biosynthesis; D-alanine from L-alanine: step 1/1. In terms of biological role, catalyzes the interconversion of L-alanine and D-alanine. May also act on other amino acids. This chain is Alanine racemase (alr), found in Frankia casuarinae (strain DSM 45818 / CECT 9043 / HFP020203 / CcI3).